Here is a 201-residue protein sequence, read N- to C-terminus: 5'(3')-deoxyribonucleotidase, cytosolic type (201 aa).

The Nucleophile role is filled by Asp-10. 2 residues coordinate Mg(2+): Asp-10 and Asp-12. Residue Asp-12 is the Proton donor of the active site. The substrate site is built by Phe-18, Phe-44, Tyr-65, Thr-99, and Lys-134. Asp-145 contributes to the Mg(2+) binding site. A Phosphoserine modification is found at Ser-182.

The protein belongs to the 5'(3')-deoxyribonucleotidase family. In terms of assembly, homodimer. Mg(2+) is required as a cofactor. In terms of tissue distribution, detected in skeletal muscle, heart and pancreas.

The protein resides in the cytoplasm. Dephosphorylates the 5' and 2'(3')-phosphates of deoxyribonucleotides, with a preference for dUMP and dTMP, intermediate activity towards dGMP, and low activity towards dCMP and dAMP. The protein is 5'(3')-deoxyribonucleotidase, cytosolic type (NT5C) of Homo sapiens (Human).